The following is a 430-amino-acid chain: Pre-mRNA-processing protein 45 (430 aa).

The segment covering 1 to 26 (MSFRTLSSLLPSPQNSEVSESSAFSR) has biased composition (polar residues). Disordered stretches follow at residues 1-28 (MSFR…SRQS), 280-299 (MERN…NKMS), and 370-430 (PTTG…PHTS).

This sequence belongs to the SNW family. In terms of assembly, associated with the spliceosome.

The protein resides in the nucleus. Its function is as follows. Involved in pre-mRNA splicing. The polypeptide is Pre-mRNA-processing protein 45 (PRP45) (Kluyveromyces lactis (strain ATCC 8585 / CBS 2359 / DSM 70799 / NBRC 1267 / NRRL Y-1140 / WM37) (Yeast)).